Consider the following 263-residue polypeptide: ATP synthase subunit b 2 (263 aa).

Residues 2–22 traverse the membrane as a helical segment; sequence LIDPLTVVAQIINFLILVALL.

Belongs to the ATPase B chain family. F-type ATPases have 2 components, F(1) - the catalytic core - and F(0) - the membrane proton channel. F(1) has five subunits: alpha(3), beta(3), gamma(1), delta(1), epsilon(1). F(0) has four main subunits: a(1), b(1), b'(1) and c(10-14). The alpha and beta chains form an alternating ring which encloses part of the gamma chain. F(1) is attached to F(0) by a central stalk formed by the gamma and epsilon chains, while a peripheral stalk is formed by the delta, b and b' chains.

It localises to the cellular thylakoid membrane. In terms of biological role, f(1)F(0) ATP synthase produces ATP from ADP in the presence of a proton or sodium gradient. F-type ATPases consist of two structural domains, F(1) containing the extramembraneous catalytic core and F(0) containing the membrane proton channel, linked together by a central stalk and a peripheral stalk. During catalysis, ATP synthesis in the catalytic domain of F(1) is coupled via a rotary mechanism of the central stalk subunits to proton translocation. Component of the F(0) channel, it forms part of the peripheral stalk, linking F(1) to F(0). This chain is ATP synthase subunit b 2, found in Acaryochloris marina (strain MBIC 11017).